The following is a 422-amino-acid chain: Glycine amidinotransferase, mitochondrial (422 aa).

The transit peptide at 1-37 (MLRVRCLRGGSRGAEAVHYIGSMLRKSFVGWVQRSFQ) directs the protein to the mitochondrion. Residues aspartate 253 and histidine 302 contribute to the active site. The Amidino-cysteine intermediate role is filled by cysteine 406.

The protein belongs to the amidinotransferase family. As to quaternary structure, homodimer. In terms of tissue distribution, ubiquitously expressed in adult tissues, with highest levels in muscle and intermediate levels in eye, heart, liver, stomach and testis. In stage 28 embryos, expression is higher in the dorsal and ventral parts of the trunk than in the head. In middle gastrulae, expression is highest around the yolk plug, while in stage 15 and tailbud stage embryos, expression is largely restricted to the region around the presumptive notochord and gut.

Its subcellular location is the mitochondrion inner membrane. The enzyme catalyses L-arginine + glycine = guanidinoacetate + L-ornithine. Its pathway is amine and polyamine biosynthesis; creatine biosynthesis; creatine from L-arginine and glycine: step 1/2. Catalyzes the biosynthesis of guanidinoacetate, the immediate precursor of creatine. Creatine plays a vital role in energy metabolism in muscle tissues. May play a role in embryonic and central nervous system development. The polypeptide is Glycine amidinotransferase, mitochondrial (Xenopus laevis (African clawed frog)).